Consider the following 258-residue polypeptide: Alpha-fibrinogenase-like (258 aa).

Residues M1–A18 form the signal peptide. The propeptide occupies Q19–L24. A Peptidase S1 domain is found at V25 to A249. 6 disulfide bridges follow: C31/C163, C50/C66, C98/C256, C142/C210, C174/C189, and C200/C225. An N-linked (GlcNAc...) asparagine glycan is attached at N44. Residues H65 and D110 each act as charge relay system in the active site. S204 serves as the catalytic Charge relay system.

This sequence belongs to the peptidase S1 family. Snake venom subfamily. In terms of assembly, monomer. Expressed by the venom gland.

Its subcellular location is the secreted. Functionally, degrades alpha chain of fibrinogen (FGA), and has strong caseinolytic activity. Cleaves oxidized insulin B-chain at '40-Tyr-|-Leu-41', '48-Phe-|-Phe-49' and '49-Phe-|-Tyr-50', and glucagon at the bonds '62-Tyr-|-Ser-63', 66-Leu-|-Asp-67' and '78-Leu-|-Met-79' bonds. The protein is Alpha-fibrinogenase-like of Daboia siamensis (Eastern Russel's viper).